The following is a 302-amino-acid chain: tRNA dimethylallyltransferase (302 aa).

10–17 (GPTATGKS) serves as a coordination point for ATP. Residue 12 to 17 (TATGKS) participates in substrate binding. The interaction with substrate tRNA stretch occupies residues 35 to 38 (DSRQ).

This sequence belongs to the IPP transferase family. As to quaternary structure, monomer. The cofactor is Mg(2+).

The enzyme catalyses adenosine(37) in tRNA + dimethylallyl diphosphate = N(6)-dimethylallyladenosine(37) in tRNA + diphosphate. Catalyzes the transfer of a dimethylallyl group onto the adenine at position 37 in tRNAs that read codons beginning with uridine, leading to the formation of N6-(dimethylallyl)adenosine (i(6)A). The chain is tRNA dimethylallyltransferase from Acaryochloris marina (strain MBIC 11017).